A 337-amino-acid polypeptide reads, in one-letter code: Anthranilate phosphoribosyltransferase (337 aa).

Residues Gly-81, 84–85, Ser-89, 91–94, 109–117, and Ala-121 contribute to the 5-phospho-alpha-D-ribose 1-diphosphate site; these read GD, NVST, and KHGNRAASS. Residue Gly-81 participates in anthranilate binding. Position 93 (Ser-93) interacts with Mg(2+). Asn-112 is a binding site for anthranilate. Arg-167 is a binding site for anthranilate. Positions 226 and 227 each coordinate Mg(2+).

It belongs to the anthranilate phosphoribosyltransferase family. In terms of assembly, homodimer. Mg(2+) is required as a cofactor.

The enzyme catalyses N-(5-phospho-beta-D-ribosyl)anthranilate + diphosphate = 5-phospho-alpha-D-ribose 1-diphosphate + anthranilate. Its pathway is amino-acid biosynthesis; L-tryptophan biosynthesis; L-tryptophan from chorismate: step 2/5. Its function is as follows. Catalyzes the transfer of the phosphoribosyl group of 5-phosphorylribose-1-pyrophosphate (PRPP) to anthranilate to yield N-(5'-phosphoribosyl)-anthranilate (PRA). The polypeptide is Anthranilate phosphoribosyltransferase (Methylobacterium sp. (strain 4-46)).